Here is a 56-residue protein sequence, read N- to C-terminus: Small ribosomal subunit protein uS14 (56 aa).

Positions 21, 24, 39, and 42 each coordinate Zn(2+).

It belongs to the universal ribosomal protein uS14 family. As to quaternary structure, component of the small ribosomal subunit (SSU). Mature N.crassa ribosomes consist of a small (40S) and a large (60S) subunit. The 40S small subunit contains 1 molecule of ribosomal RNA (18S rRNA) and at least 32 different proteins. The large 60S subunit contains 3 rRNA molecules (26S, 5.8S and 5S rRNA) and at least 42 different proteins. Zn(2+) is required as a cofactor.

The protein localises to the cytoplasm. Component of the ribosome, a large ribonucleoprotein complex responsible for the synthesis of proteins in the cell. The small ribosomal subunit (SSU) binds messenger RNAs (mRNAs) and translates the encoded message by selecting cognate aminoacyl-transfer RNA (tRNA) molecules. The large subunit (LSU) contains the ribosomal catalytic site termed the peptidyl transferase center (PTC), which catalyzes the formation of peptide bonds, thereby polymerizing the amino acids delivered by tRNAs into a polypeptide chain. The nascent polypeptides leave the ribosome through a tunnel in the LSU and interact with protein factors that function in enzymatic processing, targeting, and the membrane insertion of nascent chains at the exit of the ribosomal tunnel. The chain is Small ribosomal subunit protein uS14 (rps-29) from Neurospora crassa (strain ATCC 24698 / 74-OR23-1A / CBS 708.71 / DSM 1257 / FGSC 987).